Here is a 192-residue protein sequence, read N- to C-terminus: uncharacterized protein (192 aa).

Residues 29–160 (QRQAAVLVPI…PLDIERKQQR (132 aa)) form the Nudix hydrolase domain. The short motif at 67–89 (GAADKTDRSIIETALREAQEEVA) is the Nudix box element. The Mg(2+) site is built by Glu83 and Glu87.

It belongs to the Nudix hydrolase family. PCD1 subfamily. Mn(2+) serves as cofactor. Mg(2+) is required as a cofactor.

Its function is as follows. Probably mediates the hydrolysis of some nucleoside diphosphate derivatives. This is an uncharacterized protein from Pectobacterium atrosepticum (strain SCRI 1043 / ATCC BAA-672) (Erwinia carotovora subsp. atroseptica).